Here is a 334-residue protein sequence, read N- to C-terminus: S-adenosylmethionine decarboxylase proenzyme 2 (334 aa).

Residue Phe7 coordinates substrate. Active-site residues include Glu8 and Glu11. Residue Glu67 participates in substrate binding. Ser68 (schiff-base intermediate with substrate; via pyruvic acid) is an active-site residue. Position 68 is a pyruvic acid (Ser); by autocatalysis (Ser68). Residue Cys82 is the Proton donor; for catalytic activity of the active site. Residue Phe223 participates in substrate binding. Active-site proton acceptor; for processing activity residues include Ser229 and His243. Glu247 contacts substrate. The residue at position 298 (Ser298) is a Phosphoserine.

The protein belongs to the eukaryotic AdoMetDC family. In terms of assembly, heterotetramer of two alpha and two beta chains. It depends on pyruvate as a cofactor. Post-translationally, is synthesized initially as an inactive proenzyme. Formation of the active enzyme involves a self-maturation process in which the active site pyruvoyl group is generated from an internal serine residue via an autocatalytic post-translational modification. Two non-identical subunits are generated from the proenzyme in this reaction, and the pyruvate is formed at the N-terminus of the alpha chain, which is derived from the carboxyl end of the proenzyme. The post-translation cleavage follows an unusual pathway, termed non-hydrolytic serinolysis, in which the side chain hydroxyl group of the serine supplies its oxygen atom to form the C-terminus of the beta chain, while the remainder of the serine residue undergoes an oxidative deamination to produce ammonia and the pyruvoyl group blocking the N-terminus of the alpha chain.

The enzyme catalyses S-adenosyl-L-methionine + H(+) = S-adenosyl 3-(methylsulfanyl)propylamine + CO2. Its pathway is amine and polyamine biosynthesis; S-adenosylmethioninamine biosynthesis; S-adenosylmethioninamine from S-adenosyl-L-methionine: step 1/1. Essential for biosynthesis of the polyamines spermidine and spermine. Promotes maintenance and self-renewal of embryonic stem cells, by maintaining spermine levels. The polypeptide is S-adenosylmethionine decarboxylase proenzyme 2 (Amd2) (Mus spretus (Western Mediterranean mouse)).